The primary structure comprises 330 residues: D-lactate dehydrogenase (330 aa).

NAD(+) is bound by residues 156–157, Asp176, 206–207, 233–235, and Asp259; these read RI, VP, and AAR. Arg235 is a catalytic residue. Residue Glu264 is part of the active site. His296 serves as the catalytic Proton donor.

This sequence belongs to the D-isomer specific 2-hydroxyacid dehydrogenase family.

The catalysed reaction is (R)-lactate + NAD(+) = pyruvate + NADH + H(+). The sequence is that of D-lactate dehydrogenase (ldhD) from Staphylococcus epidermidis (strain ATCC 35984 / DSM 28319 / BCRC 17069 / CCUG 31568 / BM 3577 / RP62A).